The sequence spans 117 residues: Large ribosomal subunit protein bL20 (117 aa).

This sequence belongs to the bacterial ribosomal protein bL20 family.

Functionally, binds directly to 23S ribosomal RNA and is necessary for the in vitro assembly process of the 50S ribosomal subunit. It is not involved in the protein synthesizing functions of that subunit. The protein is Large ribosomal subunit protein bL20 of Pasteurella multocida (strain Pm70).